The following is a 480-amino-acid chain: ESX-1 secretion system ATPase EccB1 (480 aa).

The chain crosses the membrane as a helical span at residues 44–64; sequence IALGIVVAVLILAGAALLAYF. The disordered stretch occupies residues 461 to 480; sequence DTLPADPSPRKVPAGASGAP.

This sequence belongs to the EccB family. In terms of assembly, part of the ESX-1 / type VII secretion system (T7SS), which is composed of cytosolic and membrane components. The ESX-1 membrane complex is composed of EccB1, EccCa1, EccCb1, EccD1 and EccE1.

The protein localises to the cell inner membrane. In terms of biological role, an ATPase. Part of the ESX-1 specialized secretion system, which delivers several virulence factors to host cells during infection, including the key virulence factors EsxA (ESAT-6) and EsxB (CFP-10). The chain is ESX-1 secretion system ATPase EccB1 from Mycobacterium tuberculosis (strain CDC 1551 / Oshkosh).